The chain runs to 266 residues: uncharacterized protein (266 aa).

Residues M1–G22 form the signal peptide. A lipid anchor (N-palmitoyl cysteine) is attached at C23. C23 carries the S-diacylglycerol cysteine lipid modification.

Belongs to the staphylococcal tandem lipoprotein family.

It is found in the cell membrane. This is an uncharacterized protein from Staphylococcus aureus (strain USA300).